The following is a 134-amino-acid chain: Small ribosomal subunit protein uS11 (134 aa).

2 disordered regions span residues 1-22 (MPPK…KNVA) and 114-134 (SIQD…RRRV). Basic residues predominate over residues 9 to 22 (AAKKVRRKEKKNVA).

It belongs to the universal ribosomal protein uS11 family. As to quaternary structure, part of the 30S ribosomal subunit. Interacts with proteins S7 and S18. Binds to IF-3.

Located on the platform of the 30S subunit, it bridges several disparate RNA helices of the 16S rRNA. Forms part of the Shine-Dalgarno cleft in the 70S ribosome. This is Small ribosomal subunit protein uS11 from Streptomyces avermitilis (strain ATCC 31267 / DSM 46492 / JCM 5070 / NBRC 14893 / NCIMB 12804 / NRRL 8165 / MA-4680).